Here is a 538-residue protein sequence, read N- to C-terminus: Putative cysteine ligase BshC (538 aa).

Positions 419–445 (IEAKRQIQAMEQLLAEKYSELASYLEE) form a coiled coil.

It belongs to the BshC family.

Involved in bacillithiol (BSH) biosynthesis. May catalyze the last step of the pathway, the addition of cysteine to glucosamine malate (GlcN-Mal) to generate BSH. In Lysinibacillus sphaericus (strain C3-41), this protein is Putative cysteine ligase BshC.